A 473-amino-acid chain; its full sequence is Bactericidal permeability-increasing protein (473 aa).

A signal peptide spans 1–18; the sequence is MVLCCWLALVALIPMTLS. Residues 19–29 are central sheet, part 1; sequence INPGVKVRLTG. The N-terminal barrel stretch occupies residues 28-209; that stretch reads TGKGLEYGRQ…SDLNPQLKTL (182 aa). A disulfide bridge connects residues Cys153 and Cys192. Residues 211–275 are central sheet, part 2; the sequence is VLAKVDQYAE…INNMLYISVS (65 aa). The cleavage sites for elastase stretch occupies residues 225-230; the sequence is MVSSPT. The C-terminal barrel stretch occupies residues 276–446; it reads AFTINSAAFV…LAKGYPLPTL (171 aa). Asn365 is a glycosylation site (N-linked (GlcNAc...) asparagine). Residues 453–472 form a central sheet, part 3 region; the sequence is NTELQVLKDYMLIGTDVQFT.

Belongs to the BPI/LBP/Plunc superfamily. BPI/LBP family. Monomer. Homodimer; disulfide-linked. As to expression, expressed in spleen. Lower expression in gill, head kidney, entire kidney, skin, intestine and blood and lowest expression in liver and muscle.

The protein localises to the secreted. In terms of biological role, the cytotoxic action of BPI is limited to many species of Gram-negative bacteria; this specificity may be explained by a strong affinity of the very basic N-terminal half for the negatively charged lipopolysaccharides that are unique to the Gram-negative bacterial outer envelope. Exhibits neutralizing capacity towards P.aeruginosa lipopolysaccharides (LPS) and has bactericidal activity against multiple drug resistant (MDR) P.aeruginosa strains derived from people with cystic fibrosis. Has antibacterial activity against E.coli, but not against S.iniae. In Sebastes schlegelii (Korean rockfish), this protein is Bactericidal permeability-increasing protein.